We begin with the raw amino-acid sequence, 726 residues long: Catalase-peroxidase (726 aa).

Residues 90–213 (WHAAGTYRIG…LAAVQMGLIY (124 aa)) constitute a cross-link (tryptophyl-tyrosyl-methioninium (Trp-Tyr) (with M-239)). H91 serves as the catalytic Proton acceptor. A cross-link (tryptophyl-tyrosyl-methioninium (Tyr-Met) (with W-90)) is located at residues 213–239 (YVNPEGPNGNPDPLAAARDIRETFARM). H254 lines the heme b pocket. Residues 334 to 359 (AHQWKPKHGAGANTVPDAHDPSKRHA) are disordered.

It belongs to the peroxidase family. Peroxidase/catalase subfamily. Homodimer or homotetramer. Heme b is required as a cofactor. In terms of processing, formation of the three residue Trp-Tyr-Met cross-link is important for the catalase, but not the peroxidase activity of the enzyme.

The catalysed reaction is H2O2 + AH2 = A + 2 H2O. It catalyses the reaction 2 H2O2 = O2 + 2 H2O. Functionally, bifunctional enzyme with both catalase and broad-spectrum peroxidase activity. The sequence is that of Catalase-peroxidase from Bradyrhizobium sp. (strain BTAi1 / ATCC BAA-1182).